Reading from the N-terminus, the 271-residue chain is uncharacterized protein (271 aa).

The tract at residues 1-20 (MPDLHTLPAGSRPERAIRNN) is disordered.

Belongs to the PEP2 family.

This is an uncharacterized protein from Aspergillus terreus (strain NIH 2624 / FGSC A1156).